Consider the following 2773-residue polypeptide: Peramine synthetase A (2773 aa).

Positions 246–644 (FEDQVYSQPL…GRKDAQVKIR (399 aa)) are adenylation 1. In terms of domain architecture, Carrier 1 spans 774–850 (QPTCEMEERM…DLAKNCSQTL (77 aa)). Serine 811 carries the O-(pantetheine 4'-phosphoryl)serine modification. The condensation stretch occupies residues 888-1301 (QDAYPCTRLQ…MSSAEDLEQI (414 aa)). The interval 1321–1720 (ADQVQARPDS…GRKDTQVKVR (400 aa)) is adenylation 2. A methylation (Met) domain region spans residues 1810–1949 (IGRDFVGWSS…IIQHLASLGS (140 aa)). Residues 2250-2271 (MLSESLQQKAPPTARKRLPSTA) form a disordered region. The Carrier 2 domain maps to 2267 to 2345 (LPSTAPERAM…HLLQTAAAGV (79 aa)). Serine 2304 is subject to O-(pantetheine 4'-phosphoryl)serine. A thiesterase (TE) domain region spans residues 2397–2715 (TVVLTGANGF…LQDLADTARS (319 aa)).

This sequence belongs to the NRP synthetase family. Pantetheine 4'-phosphate is required as a cofactor.

The catalysed reaction is (S)-1-pyrroline-5-carboxylate + L-arginine + S-adenosyl-L-methionine + 2 ATP = peramine + 2 AMP + S-adenosyl-L-homocysteine + 2 diphosphate + H2O + 2 H(+). Nonribosomal peptide synthetase involved in the biosynthesis of peramine, a pyrrolopyrazine synthesized in association with the grass host that protects the plant from insect herbivory. The single multifunctional NRPS perA seems to be responsible for all catalytic steps in the biosynthesis of peramine. The condensation domain of perA is proposed to catalyze formation of a peptide bond between 1-pyrroline-5-carboxylate and arginine. The methylation domain of perA would catalyze the N-methylation of the alpha-amino group of arginine. The reductase domain is proposed to be responsible for reduction of the thioester and the cyclization to form an iminium ion resulting in release from the peptide synthetase. Deprotonation of this intermediate and oxidation of the pyrroline ring would give rise to peramine. This final oxidation to give the pyrrole functionality may be spontaneous. The polypeptide is Peramine synthetase A (Epichloe festucae (strain Fl1)).